The following is a 582-amino-acid chain: TRAF-type zinc finger domain-containing protein 1 (582 aa).

N-acetylalanine is present on Ala2. A TRAF-type zinc finger spans residues 27–103 (IHEIHCQRNI…DLELSILKLK (77 aa)). Ser191 carries the phosphoserine modification. The interval 216-238 (EEQERQERNRGQQPPKEGGEDGA) is disordered. A phosphoserine mark is found at Ser278, Ser320, Ser326, Ser327, Ser409, Ser415, Ser430, and Ser470. 2 disordered regions span residues 402–509 (EGIP…IAPG) and 522–582 (PENI…EEEE). 2 stretches are compositionally biased toward polar residues: residues 454–471 (PFNN…STSG) and 486–504 (LNNS…SQNG).

Interacts with MAVS, TICAM1, TRAF1, TRAF2, TRAF3 and TRAF6.

In terms of biological role, negative feedback regulator that controls excessive innate immune responses. Regulates both Toll-like receptor 4 (TLR4) and DDX58/RIG1-like helicases (RLH) pathways. May inhibit the LTR pathway by direct interaction with TRAF6 and attenuation of NF-kappa-B activation. May negatively regulate the RLH pathway downstream from MAVS and upstream of NF-kappa-B and IRF3. This chain is TRAF-type zinc finger domain-containing protein 1 (TRAFD1), found in Macaca fascicularis (Crab-eating macaque).